The following is a 30-amino-acid chain: KIPCGESCVWIPCLTSVFNCKCENKVCYHD.

The cyclopeptide (Lys-Asp) cross-link spans 1–30 (KIPCGESCVWIPCLTSVFNCKCENKVCYHD). Intrachain disulfides connect cysteine 4-cysteine 20, cysteine 8-cysteine 22, and cysteine 13-cysteine 27.

Post-translationally, this is a cyclic peptide.

Functionally, probably participates in a plant defense mechanism. Inhibits the cytopathic effects of the human immunodeficiency virus. The polypeptide is Circulin-E (Chassalia parviflora).